Reading from the N-terminus, the 254-residue chain is Proteasome subunit alpha type-7 (254 aa).

The O-linked (GlcNAc) serine glycan is linked to S136. Phosphotyrosine is present on Y159. N6-acetyllysine is present on K233.

It belongs to the peptidase T1A family. As to quaternary structure, the 26S proteasome consists of a 20S proteasome core and two 19S regulatory subunits. The 20S proteasome core is a barrel-shaped complex made of 28 subunits that are arranged in four stacked rings. The two outer rings are each formed by seven alpha subunits, and the two inner rings are formed by seven beta subunits. The proteolytic activity is exerted by three beta-subunits PSMB5, PSMB6 and PSMB7. PSMA7 interacts directly with the PSMG1-PSMG2 heterodimer which promotes 20S proteasome assembly. Interacts with HIF1A. Interacts with RAB7A. Interacts with PRKN. Interacts with ABL1 and ABL2. Interacts with EMAP2. Interacts with MAVS. Ubiquitous.

The protein resides in the cytoplasm. It localises to the nucleus. Functionally, component of the 20S core proteasome complex involved in the proteolytic degradation of most intracellular proteins. This complex plays numerous essential roles within the cell by associating with different regulatory particles. Associated with two 19S regulatory particles, forms the 26S proteasome and thus participates in the ATP-dependent degradation of ubiquitinated proteins. The 26S proteasome plays a key role in the maintenance of protein homeostasis by removing misfolded or damaged proteins that could impair cellular functions, and by removing proteins whose functions are no longer required. Associated with the PA200 or PA28, the 20S proteasome mediates ubiquitin-independent protein degradation. This type of proteolysis is required in several pathways including spermatogenesis (20S-PA200 complex) or generation of a subset of MHC class I-presented antigenic peptides (20S-PA28 complex). Inhibits the transactivation function of HIF-1A under both normoxic and hypoxia-mimicking conditions. The interaction with EMAP2 increases the proteasome-mediated HIF-1A degradation under the hypoxic conditions. Plays a role in hepatitis C virus internal ribosome entry site-mediated translation. Mediates nuclear translocation of the androgen receptor (AR) and thereby enhances androgen-mediated transactivation. Promotes MAVS degradation and thereby negatively regulates MAVS-mediated innate immune response. The protein is Proteasome subunit alpha type-7 (Psma7) of Rattus norvegicus (Rat).